We begin with the raw amino-acid sequence, 130 residues long: Small ribosomal subunit protein uS9 (130 aa).

Belongs to the universal ribosomal protein uS9 family. In terms of assembly, part of the 30S ribosomal subunit.

This chain is Small ribosomal subunit protein uS9 (rpsI), found in Bacillus subtilis (strain 168).